The following is a 453-amino-acid chain: DDB1- and CUL4-associated factor 12 (453 aa).

Residues 1–12 (MARKVVSRKRKA) show a composition bias toward basic residues. The disordered stretch occupies residues 1-34 (MARKVVSRKRKAPASPGAGSDAQGPQFGWDHSLH). The tract at residues 1 to 38 (MARKVVSRKRKAPASPGAGSDAQGPQFGWDHSLHKRKR) is required for nuclear location and interaction with MOV10. Ser15 is modified (phosphoserine). WD repeat units lie at residues 81–122 (EREF…TSQI), 123–175 (TKIP…TLDP), 176–242 (VCVG…ALKD), 243–286 (IPKE…NTLS), 287–331 (KLLS…SYNV), and 332–366 (KSVC…LFYD).

It belongs to the WD repeat DCAF12 family. As to quaternary structure, component of the DCX(DCAF12) E3 ubiquitin ligase complex, at least composed of CUL4 (CUL4A or CUL4B), DDB1, DCAF12 and RBX1. Highly expressed in lung cancer tissues and some cancer cell lines. Restricted expression in normal testis.

It is found in the cytoplasm. Its subcellular location is the cytoskeleton. It localises to the microtubule organizing center. The protein localises to the centrosome. The protein resides in the nucleus. It participates in protein modification; protein ubiquitination. Its function is as follows. Substrate-recognition component of a DCX (DDB1-CUL4-X-box) E3 ubiquitin-protein ligase complex of the DesCEND (destruction via C-end degrons) pathway, which recognizes a C-degron located at the extreme C terminus of target proteins, leading to their ubiquitination and degradation. The C-degron recognized by the DesCEND pathway is usually a motif of less than ten residues and can be present in full-length proteins, truncated proteins or proteolytically cleaved forms. The DCX(DCAF12) complex specifically recognizes proteins with a diglutamate (Glu-Glu) at the C-terminus, such as MAGEA3, MAGEA6 and CCT5, leading to their ubiquitination and degradation. Ubiquitination of MAGEA3, MAGEA6 by DCX(DCAF12) complex is required for starvation-induced autophagy. Also directly recognizes the C-terminal glutamate-leucine (Glu-Leu) degron as an alternative degron in proteins such as MOV10, leading to their ubiquitination and degradation. Controls the protein level of MOV10 during spermatogenesis and in T cells, especially after their activation. The sequence is that of DDB1- and CUL4-associated factor 12 from Homo sapiens (Human).